Consider the following 316-residue polypeptide: 4-hydroxy-3-methylbut-2-enyl diphosphate reductase (316 aa).

Cysteine 12 contributes to the [4Fe-4S] cluster binding site. (2E)-4-hydroxy-3-methylbut-2-enyl diphosphate is bound by residues histidine 41 and histidine 74. Residues histidine 41 and histidine 74 each coordinate dimethylallyl diphosphate. Positions 41 and 74 each coordinate isopentenyl diphosphate. Residue cysteine 96 coordinates [4Fe-4S] cluster. Residue histidine 124 coordinates (2E)-4-hydroxy-3-methylbut-2-enyl diphosphate. Histidine 124 contacts dimethylallyl diphosphate. Histidine 124 provides a ligand contact to isopentenyl diphosphate. Catalysis depends on glutamate 126, which acts as the Proton donor. Threonine 168 is a (2E)-4-hydroxy-3-methylbut-2-enyl diphosphate binding site. Cysteine 198 contacts [4Fe-4S] cluster. (2E)-4-hydroxy-3-methylbut-2-enyl diphosphate-binding residues include serine 226, serine 227, asparagine 228, and serine 270. 4 residues coordinate dimethylallyl diphosphate: serine 226, serine 227, asparagine 228, and serine 270. Residues serine 226, serine 227, asparagine 228, and serine 270 each contribute to the isopentenyl diphosphate site.

The protein belongs to the IspH family. [4Fe-4S] cluster serves as cofactor.

The enzyme catalyses isopentenyl diphosphate + 2 oxidized [2Fe-2S]-[ferredoxin] + H2O = (2E)-4-hydroxy-3-methylbut-2-enyl diphosphate + 2 reduced [2Fe-2S]-[ferredoxin] + 2 H(+). It carries out the reaction dimethylallyl diphosphate + 2 oxidized [2Fe-2S]-[ferredoxin] + H2O = (2E)-4-hydroxy-3-methylbut-2-enyl diphosphate + 2 reduced [2Fe-2S]-[ferredoxin] + 2 H(+). Its pathway is isoprenoid biosynthesis; dimethylallyl diphosphate biosynthesis; dimethylallyl diphosphate from (2E)-4-hydroxy-3-methylbutenyl diphosphate: step 1/1. It functions in the pathway isoprenoid biosynthesis; isopentenyl diphosphate biosynthesis via DXP pathway; isopentenyl diphosphate from 1-deoxy-D-xylulose 5-phosphate: step 6/6. Its function is as follows. Catalyzes the conversion of 1-hydroxy-2-methyl-2-(E)-butenyl 4-diphosphate (HMBPP) into a mixture of isopentenyl diphosphate (IPP) and dimethylallyl diphosphate (DMAPP). Acts in the terminal step of the DOXP/MEP pathway for isoprenoid precursor biosynthesis. In Marinobacter nauticus (strain ATCC 700491 / DSM 11845 / VT8) (Marinobacter aquaeolei), this protein is 4-hydroxy-3-methylbut-2-enyl diphosphate reductase.